The chain runs to 745 residues: Ankyrin repeat and protein kinase domain-containing protein 1 (745 aa).

Positions 34–301 (EEEWHLVASG…NVAVETDMLL (268 aa)) constitute a Protein kinase domain. Residues 40-48 (VASGGFSKV) and lysine 63 each bind ATP. Aspartate 157 serves as the catalytic Proton acceptor. ANK repeat units follow at residues 369-398 (NRVTPLHFLVAGGSLEQVRLLLSHDVDVDC), 402-431 (SGYTPLLIATQDQQPDLCALLLAHGADTNL), 435-464 (DGWAPLHFAAQNGDDHTARLLLDHGALVNA), 468-497 (EGWTPLHLAAQNNFENVARLLVSRQADLSP), 501-530 (EGKTPLHVAAYFGHIGLVKLLSGQGAELDA), 534-563 (NLRTPLHLAVERGKVRAIQHLLKCGALPDA), 567-596 (SGYSPLHIAAARGKDLIFKMLLRYGASLEL), 600-629 (QGWTPLHLATYKGHLEIIHQLAKSHVDLDA), 633-662 (MQWTPLHLAAFQGEEGVMLALLQCGANPNA), 666-695 (SGWTPLHLAVHKGTFLGITHLLEYGADIHA), and 699-728 (VGWTPAHLAALKGNTAILKVLVKAAAQVDV).

It belongs to the protein kinase superfamily. TKL Ser/Thr protein kinase family.

The catalysed reaction is L-seryl-[protein] + ATP = O-phospho-L-seryl-[protein] + ADP + H(+). It carries out the reaction L-threonyl-[protein] + ATP = O-phospho-L-threonyl-[protein] + ADP + H(+). This Mus musculus (Mouse) protein is Ankyrin repeat and protein kinase domain-containing protein 1 (Ankk1).